A 514-amino-acid chain; its full sequence is Transmembrane protein 117 (514 aa).

The Cytoplasmic segment spans residues 1 to 15 (MGKDFRYYFQHPWSR). A helical membrane pass occupies residues 16–36 (MIVAYLVIFFNFLIFAEDPVS). At 37–65 (HSQTEANVIVVGNCFSFVTNKYPRGVGWR) the chain is on the extracellular side. Residues 66–86 (ILKVLLWLLAILIGLIAGKFL) traverse the membrane as a helical segment. Residues 87-110 (FHQRLFGQLLRLKMFREDHGSWMT) are Cytoplasmic-facing. The chain crosses the membrane as a helical span at residues 111-131 (MFFSTILFLFIFSHIYNTILL). Over 132–154 (MDGNMGAYLITDYMGIRNESFMK) the chain is Extracellular. Residues 155–175 (LAAVGTWMGDFVTAWMVTDMM) form a helical membrane-spanning segment. At 176–198 (LQDKPYPDWGKSARAFWKKGNVR) the chain is on the cytoplasmic side. Residues 199-219 (IILFWTVLFTLTSVVVLVITT) form a helical membrane-spanning segment. At 220-239 (DWISWDKLNRGFLPSDEVSR) the chain is on the extracellular side. A helical membrane pass occupies residues 240–260 (AFLASFILVFDLLIVMQDWEF). The Cytoplasmic portion of the chain corresponds to 261 to 295 (PHFMGDVDVNLPGLHTPHMQFKIPFFQKIFKEEYR). Residues 296–316 (IHITGKWFNYGIIFLVLILDL) traverse the membrane as a helical segment. At 317 to 394 (NMWKNQIFYK…FIGASLDVKC (78 aa)) the chain is on the extracellular side. Residues asparagine 353 and asparagine 371 are each glycosylated (N-linked (GlcNAc...) asparagine). A helical transmembrane segment spans residues 395–415 (LAFVPSLIAFVWFGFFIWFFG). Over 416-514 (RFLKNEQGME…PAASQRMRTN (99 aa)) the chain is Cytoplasmic. The segment at 430–450 (TYTRMKRKSPSEHSKDMGITR) is disordered. Residues 438–448 (SPSEHSKDMGI) are compositionally biased toward basic and acidic residues. Threonine 453 carries the phosphothreonine modification. Positions 494 to 514 (ESTSEVEAEQEPAASQRMRTN) are disordered.

This sequence belongs to the TMEM117 family.

The protein resides in the cell membrane. Functionally, involved in endoplasmic reticulum (ER) stress-induced cell death pathway. This Mus musculus (Mouse) protein is Transmembrane protein 117 (Tmem117).